The chain runs to 100 residues: Integration host factor subunit beta (100 aa).

The protein belongs to the bacterial histone-like protein family. As to quaternary structure, heterodimer of an alpha and a beta chain.

This protein is one of the two subunits of integration host factor, a specific DNA-binding protein that functions in genetic recombination as well as in transcriptional and translational control. The sequence is that of Integration host factor subunit beta from Rhodospirillum rubrum (strain ATCC 11170 / ATH 1.1.1 / DSM 467 / LMG 4362 / NCIMB 8255 / S1).